The following is a 181-amino-acid chain: 6,7-dimethyl-8-ribityllumazine synthase (181 aa).

5-amino-6-(D-ribitylamino)uracil is bound by residues Tyr27, 58 to 60, and 87 to 89; these read ALE and CVI. Position 92 to 93 (92 to 93) interacts with (2S)-2-hydroxy-3-oxobutyl phosphate; that stretch reads ET. Catalysis depends on His95, which acts as the Proton donor. Residue Asn120 participates in 5-amino-6-(D-ribitylamino)uracil binding. Arg134 is a binding site for (2S)-2-hydroxy-3-oxobutyl phosphate.

This sequence belongs to the DMRL synthase family.

The catalysed reaction is (2S)-2-hydroxy-3-oxobutyl phosphate + 5-amino-6-(D-ribitylamino)uracil = 6,7-dimethyl-8-(1-D-ribityl)lumazine + phosphate + 2 H2O + H(+). Its pathway is cofactor biosynthesis; riboflavin biosynthesis; riboflavin from 2-hydroxy-3-oxobutyl phosphate and 5-amino-6-(D-ribitylamino)uracil: step 1/2. Catalyzes the formation of 6,7-dimethyl-8-ribityllumazine by condensation of 5-amino-6-(D-ribitylamino)uracil with 3,4-dihydroxy-2-butanone 4-phosphate. This is the penultimate step in the biosynthesis of riboflavin. The polypeptide is 6,7-dimethyl-8-ribityllumazine synthase (Methylobacterium nodulans (strain LMG 21967 / CNCM I-2342 / ORS 2060)).